Reading from the N-terminus, the 301-residue chain is Ribosomal protein L11 methyltransferase (301 aa).

S-adenosyl-L-methionine-binding residues include Thr-130, Gly-151, Asp-172, and Asn-239.

This sequence belongs to the methyltransferase superfamily. PrmA family.

The protein resides in the cytoplasm. It carries out the reaction L-lysyl-[protein] + 3 S-adenosyl-L-methionine = N(6),N(6),N(6)-trimethyl-L-lysyl-[protein] + 3 S-adenosyl-L-homocysteine + 3 H(+). Methylates ribosomal protein L11. This Campylobacter hominis (strain ATCC BAA-381 / DSM 21671 / CCUG 45161 / LMG 19568 / NCTC 13146 / CH001A) protein is Ribosomal protein L11 methyltransferase.